The primary structure comprises 907 residues: Leucine--tRNA ligase (907 aa).

Positions 42 to 52 (PYPSGKLHMGH) match the 'HIGH' region motif. The 'KMSKS' region motif lies at 651–655 (TMSKS). Lys654 is a binding site for ATP.

The protein belongs to the class-I aminoacyl-tRNA synthetase family.

The protein localises to the cytoplasm. It catalyses the reaction tRNA(Leu) + L-leucine + ATP = L-leucyl-tRNA(Leu) + AMP + diphosphate. In Verminephrobacter eiseniae (strain EF01-2), this protein is Leucine--tRNA ligase.